The chain runs to 434 residues: Glutamate-1-semialdehyde 2,1-aminomutase 1 (434 aa).

Position 270 is an N6-(pyridoxal phosphate)lysine (K270).

This sequence belongs to the class-III pyridoxal-phosphate-dependent aminotransferase family. HemL subfamily. Homodimer. It depends on pyridoxal 5'-phosphate as a cofactor.

The protein resides in the cytoplasm. The catalysed reaction is (S)-4-amino-5-oxopentanoate = 5-aminolevulinate. It participates in porphyrin-containing compound metabolism; protoporphyrin-IX biosynthesis; 5-aminolevulinate from L-glutamyl-tRNA(Glu): step 2/2. This is Glutamate-1-semialdehyde 2,1-aminomutase 1 from Bacillus thuringiensis (strain Al Hakam).